Here is a 379-residue protein sequence, read N- to C-terminus: Queuine tRNA-ribosyltransferase (379 aa).

Asp-89 serves as the catalytic Proton acceptor. Residues 89–93 (DSGGF), Asp-143, Gln-187, and Gly-214 each bind substrate. Positions 245-251 (GVGKPED) are RNA binding. Asp-264 serves as the catalytic Nucleophile. Positions 269-273 (TRNAR) are RNA binding; important for wobble base 34 recognition. Residues Cys-302, Cys-304, Cys-307, and His-333 each contribute to the Zn(2+) site.

The protein belongs to the queuine tRNA-ribosyltransferase family. In terms of assembly, homodimer. Within each dimer, one monomer is responsible for RNA recognition and catalysis, while the other monomer binds to the replacement base PreQ1. Requires Zn(2+) as cofactor.

The enzyme catalyses 7-aminomethyl-7-carbaguanine + guanosine(34) in tRNA = 7-aminomethyl-7-carbaguanosine(34) in tRNA + guanine. The protein operates within tRNA modification; tRNA-queuosine biosynthesis. Catalyzes the base-exchange of a guanine (G) residue with the queuine precursor 7-aminomethyl-7-deazaguanine (PreQ1) at position 34 (anticodon wobble position) in tRNAs with GU(N) anticodons (tRNA-Asp, -Asn, -His and -Tyr). Catalysis occurs through a double-displacement mechanism. The nucleophile active site attacks the C1' of nucleotide 34 to detach the guanine base from the RNA, forming a covalent enzyme-RNA intermediate. The proton acceptor active site deprotonates the incoming PreQ1, allowing a nucleophilic attack on the C1' of the ribose to form the product. After dissociation, two additional enzymatic reactions on the tRNA convert PreQ1 to queuine (Q), resulting in the hypermodified nucleoside queuosine (7-(((4,5-cis-dihydroxy-2-cyclopenten-1-yl)amino)methyl)-7-deazaguanosine). This Edwardsiella ictaluri (strain 93-146) protein is Queuine tRNA-ribosyltransferase.